A 290-amino-acid chain; its full sequence is Shikimate dehydrogenase (NADP(+)) (290 aa).

Shikimate-binding positions include 19–21 and serine 65; that span reads SLS. Catalysis depends on lysine 69, which acts as the Proton acceptor. Residues asparagine 90 and aspartate 105 each contribute to the shikimate site. NADP(+) contacts are provided by residues 129-133 and leucine 231; that span reads GAGGA. Residue tyrosine 233 coordinates shikimate. Glycine 254 provides a ligand contact to NADP(+).

Belongs to the shikimate dehydrogenase family. In terms of assembly, homodimer.

It carries out the reaction shikimate + NADP(+) = 3-dehydroshikimate + NADPH + H(+). The protein operates within metabolic intermediate biosynthesis; chorismate biosynthesis; chorismate from D-erythrose 4-phosphate and phosphoenolpyruvate: step 4/7. Involved in the biosynthesis of the chorismate, which leads to the biosynthesis of aromatic amino acids. Catalyzes the reversible NADPH linked reduction of 3-dehydroshikimate (DHSA) to yield shikimate (SA). This is Shikimate dehydrogenase (NADP(+)) from Latilactobacillus sakei subsp. sakei (strain 23K) (Lactobacillus sakei subsp. sakei).